The following is a 102-amino-acid chain: NADH-quinone oxidoreductase subunit K 1 (102 aa).

The next 3 helical transmembrane spans lie at 5–25 (LLHV…CVLV), 30–50 (IIMM…AFVG), and 62–82 (VFAL…LALV).

The protein belongs to the complex I subunit 4L family. In terms of assembly, NDH-1 is composed of 14 different subunits. Subunits NuoA, H, J, K, L, M, N constitute the membrane sector of the complex.

The protein localises to the cell inner membrane. The enzyme catalyses a quinone + NADH + 5 H(+)(in) = a quinol + NAD(+) + 4 H(+)(out). Its function is as follows. NDH-1 shuttles electrons from NADH, via FMN and iron-sulfur (Fe-S) centers, to quinones in the respiratory chain. The immediate electron acceptor for the enzyme in this species is believed to be ubiquinone. Couples the redox reaction to proton translocation (for every two electrons transferred, four hydrogen ions are translocated across the cytoplasmic membrane), and thus conserves the redox energy in a proton gradient. The sequence is that of NADH-quinone oxidoreductase subunit K 1 from Geotalea uraniireducens (strain Rf4) (Geobacter uraniireducens).